The primary structure comprises 316 residues: Haloacid dehalogenase-like hydrolase domain-containing protein At4g39970 (316 aa).

Residues 1–46 (MAVSCNHSAILFSPSSTAGSSSVTSSSSLIGFPRFQTLRFKSRSVY) constitute a chloroplast transit peptide. Aspartate 69 serves as the catalytic Nucleophile. 3 residues coordinate Mg(2+): aspartate 69, aspartate 71, and aspartate 259. Aspartate 71 acts as the Proton donor in catalysis.

It belongs to the HAD-like hydrolase superfamily. DOG/GPP family. Requires Mg(2+) as cofactor.

It localises to the plastid. It is found in the chloroplast. This Arabidopsis thaliana (Mouse-ear cress) protein is Haloacid dehalogenase-like hydrolase domain-containing protein At4g39970.